The following is a 1064-amino-acid chain: Lethal(2) giant larvae protein homolog 1 (1064 aa).

WD repeat units lie at residues 38-71 (SALA…FTGL), 78-119 (VTQM…ALSF), 139-176 (VTVV…GQTL), 200-234 (SLQG…DHIF), 240-272 (LESL…GSFP), 290-332 (AINK…ETLV), 340-374 (IIDF…VLDL), 396-474 (TCSA…YKLS), 518-593 (QKVA…RVLV), 602-663 (TAVT…LRQS), 723-783 (VRCL…KEVQ), 792-844 (AIAV…VSAK), 849-902 (LTAH…VHYS), and 916-939 (VFTR…SLSA). Ser663 carries the post-translational modification Phosphoserine. Thr958 is subject to Phosphothreonine. The segment at 966-1010 (ESPKLSQANGTPSILLAPQSLDGSPDPAHSMGPDTPEPPEAALSP) is disordered. A phosphoserine mark is found at Ser967 and Ser985.

This sequence belongs to the WD repeat L(2)GL family. Associated with nonmuscle myosin II heavy chain. Interacts with PRKCI/aPKC, PARD6B/Par-6 and PARD6A. Interacts with STX4A. Interacts with RAB10 (GDP-bound form); the interaction is direct and promotes RAB10 association with membranes and activation through competition with the Rab inhibitor GDI1. Interacts with DCAF1. In terms of processing, phosphorylated at least at Ser-663 by PRKCI. In terms of tissue distribution, expressed in brain, kidney, and muscle but is barely seen in heart and placenta. Down-regulated or lost in all cell lines and in most of the tumor samples analyzed. Loss was associated with advanced stage of the disease.

It localises to the early endosome membrane. The protein resides in the golgi apparatus. It is found in the trans-Golgi network membrane. The protein localises to the golgi apparatus membrane. Its subcellular location is the cell projection. It localises to the axon. The protein resides in the cytoplasm. It is found in the cytoskeleton. Functionally, cortical cytoskeleton protein found in a complex involved in maintaining cell polarity and epithelial integrity. Involved in the regulation of mitotic spindle orientation, proliferation, differentiation and tissue organization of neuroepithelial cells. Involved in axonogenesis through RAB10 activation thereby regulating vesicular membrane trafficking toward the axonal plasma membrane. This Homo sapiens (Human) protein is Lethal(2) giant larvae protein homolog 1 (LLGL1).